Consider the following 1480-residue polypeptide: Cystic fibrosis transmembrane conductance regulator (1480 aa).

Residues 1–77 are Cytoplasmic-facing; that stretch reads MQRSPLEKAS…KLINALRRCF (77 aa). Residues 78–98 traverse the membrane as a helical segment; the sequence is FWRFMFYGIFLYLGEVTKAVQ. An ABC transmembrane type-1 1 domain is found at 81-365; the sequence is FMFYGIFLYL…WAVQTWYDSL (285 aa). Residues 99–122 are Extracellular-facing; sequence PLLLGRIIASYDPDNKEERSIAIY. Residues 123 to 146 traverse the membrane as a helical segment; it reads LGIGLCLLFIVRTLLLHPAIFGLH. Residues 147–195 lie on the Cytoplasmic side of the membrane; the sequence is HIGMQMRIAMFSLIYKKTLKLSSRVLDKISIGQLVSLLSNNLNKFDEGL. The chain crosses the membrane as a helical span at residues 196–216; it reads ALAHFVWIAPLQVALLMGLIW. At 217–222 the chain is on the extracellular side; sequence ELLQAS. A helical transmembrane segment spans residues 223–243; it reads AFCGLGFLIVLALFQAGLGRM. At 244 to 298 the chain is on the cytoplasmic side; sequence MMKYRDQRAGKISERLVITSEMIENIQSVKAYCWEEAMEKMIENLRQTELKLTRK. The helical transmembrane segment at 299-319 threads the bilayer; the sequence is AAYVRYFNSSAFFFSGFFVVF. Topologically, residues 320–339 are extracellular; the sequence is LSVLPYALIKGIILRKIFTT. A helical transmembrane segment spans residues 340–358; that stretch reads ISFCIVLRMAVTRQFPWAV. Topologically, residues 359–858 are cytoplasmic; it reads QTWYDSLGAI…YLRYITVHKS (500 aa). ATP-binding positions include tryptophan 401, serine 434, 458-465, and glutamine 493; that span reads GSTGAGKT. The region spanning 423-646 is the ABC transporter 1 domain; the sequence is NGDDSLFFSN…RPDFSSKLMG (224 aa). Cysteine 524 carries S-palmitoyl cysteine lipidation. Phosphoserine is present on residues serine 549 and serine 660. Residues 654-831 are disordered R region; sequence SAERRNSILT…EEINEEDLKE (178 aa). Position 670 is a phosphoserine; by PKA (serine 670). Serine 686 is modified (phosphoserine). Residue lysine 688 forms a Glycyl lysine isopeptide (Lys-Gly) (interchain with G-Cter in ubiquitin) linkage. Phosphoserine is present on residues serine 700 and serine 712. Threonine 717 is modified (phosphothreonine). Phosphoserine is present on residues serine 737, serine 753, serine 768, serine 790, serine 795, and serine 813. Residues 859–879 form a helical membrane-spanning segment; the sequence is LIFVLIWCLVIFLAEVAASLV. The ABC transmembrane type-1 2 domain maps to 859 to 1155; that stretch reads LIFVLIWCLV…AVNSSIDVDS (297 aa). Residues 880-918 lie on the Extracellular side of the membrane; the sequence is VLWLLGNTPLQDKGNSTHSRNNSYAVIITSTSSYYVFYI. N-linked (GlcNAc...) asparagine glycans are attached at residues asparagine 894 and asparagine 900. The chain crosses the membrane as a discontinuously helical span at residues 919-939; it reads YVGVADTLLAMGFFRGLPLVH. Residues 940–990 lie on the Cytoplasmic side of the membrane; it reads TLITVSKILHHKMLHSVLQAPMSTLNTLKAGGILNRFSKDIAILDDLLPLT. Residues 991–1011 traverse the membrane as a helical segment; that stretch reads IFDFIQLLLIVIGAIAVVAVL. Residues 1012–1013 lie on the Extracellular side of the membrane; that stretch reads QP. A helical transmembrane segment spans residues 1014–1034; that stretch reads YIFVATVPVIVAFIMLRAYFL. At 1035-1095 the chain is on the cytoplasmic side; that stretch reads QTSQQLKQLE…TANWFLYLST (61 aa). A helical transmembrane segment spans residues 1096-1116; sequence LRWFQMRIEMIFVIFFIAVTF. The Extracellular segment spans residues 1117-1130; it reads ISILTTGEGEGRVG. A helical membrane pass occupies residues 1131–1151; that stretch reads IILTLAMNIMSTLQWAVNSSI. Residues 1152–1480 lie on the Cytoplasmic side of the membrane; sequence DVDSLMRSVS…TEEEVQDTRL (329 aa). The ABC transporter 2 domain maps to 1210 to 1443; it reads MTVKDLTAKY…RSLFRQAISP (234 aa). Residues tyrosine 1219 and 1244–1251 contribute to the ATP site; that span reads GRTGSGKS. The interval 1386-1480 is interaction with GORASP2; sequence RTLKQAFADC…TEEEVQDTRL (95 aa). The S-palmitoyl cysteine moiety is linked to residue cysteine 1395. Serine 1444 and serine 1456 each carry phosphoserine. The interval 1452 to 1480 is disordered; it reads HRNSSKCKSKPQIAALKEETEEEVQDTRL. Positions 1470–1480 are enriched in acidic residues; that stretch reads ETEEEVQDTRL. The PDZ-binding motif lies at 1478–1480; it reads TRL.

The protein belongs to the ABC transporter superfamily. ABCC family. CFTR transporter (TC 3.A.1.202) subfamily. Monomer; does not require oligomerization for channel activity. May form oligomers in the membrane. Interacts with SLC26A3, SLC26A6 and NHERF1. Interacts with SHANK2. Interacts with MYO6. Interacts (via C-terminus) with GOPC (via PDZ domain); this promotes CFTR internalization and thereby decreases channel activity. Interacts with SLC4A7 through NHERF1. Found in a complex with MYO5B and RAB11A. Interacts with ANO1. Interacts with SLC26A8. Interacts with AHCYL1; the interaction increases CFTR activity. Interacts with CSE1L. The core-glycosylated form interacts with GORASP2 (via PDZ GRASP-type 1 domain) in respone to ER stress. Interacts with MARCHF2; the interaction leads to CFTR ubiqtuitination and degradation. Interacts with ADGRG2. N-glycosylated. In terms of processing, phosphorylated; cAMP treatment promotes phosphorylation and activates the channel. Dephosphorylation decreases the ATPase activity (in vitro). Phosphorylation at PKA sites activates the channel. Phosphorylation at PKC sites enhances the response to phosphorylation by PKA. Phosphorylated by AMPK; this inhibits channel activity. Post-translationally, ubiquitinated, leading to its degradation in the lysosome. Deubiquitination by USP10 in early endosomes enhances its endocytic recycling to the cell membrane. Ubiquitinated by RNF185 during ER stress. Ubiquitinated by MARCHF2.

It localises to the apical cell membrane. Its subcellular location is the early endosome membrane. The protein localises to the cell membrane. The protein resides in the recycling endosome membrane. It is found in the endoplasmic reticulum membrane. It localises to the nucleus. It catalyses the reaction ATP + H2O + closed Cl(-) channel = ADP + phosphate + open Cl(-) channel.. The enzyme catalyses chloride(in) = chloride(out). It carries out the reaction hydrogencarbonate(in) = hydrogencarbonate(out). The catalysed reaction is ATP + H2O = ADP + phosphate + H(+). Functionally, epithelial ion channel that plays an important role in the regulation of epithelial ion and water transport and fluid homeostasis. Mediates the transport of chloride ions across the cell membrane. Possesses an intrinsic ATPase activity and utilizes ATP to gate its channel; the passive flow of anions through the channel is gated by cycles of ATP binding and hydrolysis by the ATP-binding domains. The ion channel is also permeable to HCO(3)(-); selectivity depends on the extracellular chloride concentration. Exerts its function also by modulating the activity of other ion channels and transporters. Contributes to the regulation of the pH and the ion content of the epithelial fluid layer. Modulates the activity of the epithelial sodium channel (ENaC) complex, in part by regulating the cell surface expression of the ENaC complex. May regulate bicarbonate secretion and salvage in epithelial cells by regulating the transporter SLC4A7. Can inhibit the chloride channel activity of ANO1. Plays a role in the chloride and bicarbonate homeostasis during sperm epididymal maturation and capacitation. The polypeptide is Cystic fibrosis transmembrane conductance regulator (Pan troglodytes (Chimpanzee)).